Here is a 39-residue protein sequence, read N- to C-terminus: Cytochrome b559 subunit beta (39 aa).

Residues 14–30 (WLAIHGLAVPTVSFLGS) traverse the membrane as a helical segment. Residue His18 participates in heme binding.

Belongs to the PsbE/PsbF family. As to quaternary structure, heterodimer of an alpha subunit and a beta subunit. PSII is composed of 1 copy each of membrane proteins PsbA, PsbB, PsbC, PsbD, PsbE, PsbF, PsbH, PsbI, PsbJ, PsbK, PsbL, PsbM, PsbT, PsbX, PsbY, PsbZ, Psb30/Ycf12, at least 3 peripheral proteins of the oxygen-evolving complex and a large number of cofactors. It forms dimeric complexes. Requires heme b as cofactor.

The protein localises to the plastid. The protein resides in the chloroplast thylakoid membrane. This b-type cytochrome is tightly associated with the reaction center of photosystem II (PSII). PSII is a light-driven water:plastoquinone oxidoreductase that uses light energy to abstract electrons from H(2)O, generating O(2) and a proton gradient subsequently used for ATP formation. It consists of a core antenna complex that captures photons, and an electron transfer chain that converts photonic excitation into a charge separation. This Allium textile (Textile onion) protein is Cytochrome b559 subunit beta.